Reading from the N-terminus, the 538-residue chain is Syncytin-1 (538 aa).

An N-terminal signal peptide occupies residues 1–20 (MALPYHILLFTVLLPSFTLT). Topologically, residues 21 to 443 (APPPCRCMTS…NTGPWGLLSQ (423 aa)) are extracellular. A glycan (N-linked (GlcNAc...) asparagine) is linked at Asn-169. The CXXC signature appears at 186-189 (CWIC). 3 disulfide bridges follow: Cys-186/Cys-189, Cys-186/Cys-405, and Cys-397/Cys-404. N-linked (GlcNAc...) asparagine glycans are attached at residues Asn-208, Asn-214, Asn-234, and Asn-281. Residues 320–340 (ILPFVIGAGVLGALGTGIGGI) are fusion peptide. The immunosuppression stretch occupies residues 380–396 (LQNRRALDLLTAERGGT). The CX6CC motif lies at 397-405 (CLFLGEECC). Asn-409 carries N-linked (GlcNAc...) asparagine glycosylation. The chain crosses the membrane as a helical span at residues 444–464 (WMPWILPFLGPLAAIILLLLF). The tract at residues 465–484 (GPCIFNLLVNFVSSRIEAVK) is essential for the fusiogenic function. The Cytoplasmic portion of the chain corresponds to 465–538 (GPCIFNLLVN…LLRPNSAGSS (74 aa)). Positions 496–538 (KIYRRPLDRPASPRSDVNDIKCTPPEEISTAQPLLRPNSAGSS) are disordered.

This sequence belongs to the gamma type-C retroviral envelope protein family. HERV class-I W env subfamily. In terms of assembly, the mature envelope protein (Env) consists of a trimer of SU-TM heterodimers attached probably by a labile interchain disulfide bond. Interacts with the C-type lectin CD209/DC-SIGN. Post-translationally, specific enzymatic cleavages in vivo yield mature proteins. Envelope glycoproteins are synthesized as an inactive precursor that is heavily N-glycosylated and processed likely by furin in the Golgi to yield the mature SU and TM proteins. The cleavage site between SU and TM requires the minimal sequence [KR]-X-[KR]-R. In terms of processing, the CXXC motif is highly conserved across a broad range of retroviral envelope proteins. It is thought to participate in the formation of a labile disulfide bond possibly with the CX6CC motif present in the transmembrane protein.

The protein localises to the cell membrane. The protein resides in the virion. Its function is as follows. This endogenous retroviral envelope protein has retained its original fusogenic properties and participates in trophoblast fusion and the formation of a syncytium during placenta morphogenesis. May recognize and induce fusion through binding of SLC1A4 and SLC1A5. Endogenous envelope proteins may have kept, lost or modified their original function during evolution. Retroviral envelope proteins mediate receptor recognition and membrane fusion during early infection. The surface protein (SU) mediates receptor recognition, while the transmembrane protein (TM) acts as a class I viral fusion protein. The protein may have at least 3 conformational states: pre-fusion native state, pre-hairpin intermediate state, and post-fusion hairpin state. During viral and target cell membrane fusion, the coiled coil regions (heptad repeats) assume a trimer-of-hairpins structure, positioning the fusion peptide in close proximity to the C-terminal region of the ectodomain. The formation of this structure appears to drive apposition and subsequent fusion of membranes. This is Syncytin-1 (ERVW-1) from Gorilla gorilla gorilla (Western lowland gorilla).